Consider the following 67-residue polypeptide: Small ribosomal subunit protein bS21 (67 aa).

Belongs to the bacterial ribosomal protein bS21 family.

In Hydrogenobaculum sp. (strain Y04AAS1), this protein is Small ribosomal subunit protein bS21.